We begin with the raw amino-acid sequence, 717 residues long: Fatty acid oxidation complex subunit alpha (717 aa).

The interval 1 to 189 (MIYQSPTIEV…NVGAIDALVA (189 aa)) is enoyl-CoA hydratase/isomerase. Asp-296 provides a ligand contact to substrate. The tract at residues 311-717 (KKVNSAAVLG…ANNGSYYQQA (407 aa)) is 3-hydroxyacyl-CoA dehydrogenase. NAD(+)-binding positions include Met-324, Asp-343, 400–402 (VVE), Lys-407, and Ser-429. His-450 (for 3-hydroxyacyl-CoA dehydrogenase activity) is an active-site residue. Residue Asn-453 participates in NAD(+) binding. Positions 500 and 660 each coordinate substrate.

The protein in the N-terminal section; belongs to the enoyl-CoA hydratase/isomerase family. This sequence in the C-terminal section; belongs to the 3-hydroxyacyl-CoA dehydrogenase family. In terms of assembly, heterotetramer of two alpha chains (FadB) and two beta chains (FadA).

The catalysed reaction is a (3S)-3-hydroxyacyl-CoA + NAD(+) = a 3-oxoacyl-CoA + NADH + H(+). It catalyses the reaction a (3S)-3-hydroxyacyl-CoA = a (2E)-enoyl-CoA + H2O. The enzyme catalyses a 4-saturated-(3S)-3-hydroxyacyl-CoA = a (3E)-enoyl-CoA + H2O. It carries out the reaction (3S)-3-hydroxybutanoyl-CoA = (3R)-3-hydroxybutanoyl-CoA. The catalysed reaction is a (3Z)-enoyl-CoA = a 4-saturated (2E)-enoyl-CoA. It catalyses the reaction a (3E)-enoyl-CoA = a 4-saturated (2E)-enoyl-CoA. Its pathway is lipid metabolism; fatty acid beta-oxidation. In terms of biological role, involved in the aerobic and anaerobic degradation of long-chain fatty acids via beta-oxidation cycle. Catalyzes the formation of 3-oxoacyl-CoA from enoyl-CoA via L-3-hydroxyacyl-CoA. It can also use D-3-hydroxyacyl-CoA and cis-3-enoyl-CoA as substrate. The chain is Fatty acid oxidation complex subunit alpha from Shewanella piezotolerans (strain WP3 / JCM 13877).